The following is a 151-amino-acid chain: Large ribosomal subunit protein uL15 (151 aa).

The disordered stretch occupies residues 1–45; the sequence is MNLSSLKPVKGSTKTCKRVGRGQGSGCGGTSTRGHKGQKSRSGYS. Gly residues predominate over residues 21–31; the sequence is RGQGSGCGGTS.

This sequence belongs to the universal ribosomal protein uL15 family. Part of the 50S ribosomal subunit.

Its function is as follows. Binds to the 23S rRNA. The chain is Large ribosomal subunit protein uL15 from Azobacteroides pseudotrichonymphae genomovar. CFP2.